The primary structure comprises 309 residues: Foldase protein PrsA 2 (309 aa).

The N-terminal stretch at 1–22 (MKQMNKLITGVVTLATVVTLSA) is a signal peptide. The N-palmitoyl cysteine moiety is linked to residue C23. C23 is lipidated: S-diacylglycerol cysteine. In terms of domain architecture, PpiC spans 146–241 (TPTMTAEIMQ…RTYHIIKVTK (96 aa)).

The protein belongs to the PrsA family.

The protein localises to the cell membrane. The enzyme catalyses [protein]-peptidylproline (omega=180) = [protein]-peptidylproline (omega=0). Plays a major role in protein secretion by helping the post-translocational extracellular folding of several secreted proteins. The chain is Foldase protein PrsA 2 from Streptococcus pyogenes serotype M6 (strain ATCC BAA-946 / MGAS10394).